The primary structure comprises 1325 residues: uncharacterized protein (1325 aa).

An N-terminal signal peptide occupies residues 1 to 27 (MHTFTRKVKWPFMFTAIGLTFGIVAVA). The N-palmitoyl cysteine moiety is linked to residue Cys28. Cys28 carries S-diacylglycerol cysteine lipidation. Disordered stretches follow at residues 379–402 (RAASSSSEGTIQLKTASDGGGTTQ) and 430–464 (NTNANQTGGGGSGGGGGTSTGSSTGSSTETTTGNS). Gly residues predominate over residues 436–448 (TGGGGSGGGGGTS). Over residues 449-464 (TGSSTGSSTETTTGNS) the composition is skewed to low complexity.

The protein belongs to the MG307/MG309/MG338 family.

Its subcellular location is the cell membrane. This is an uncharacterized protein from Mycoplasma pneumoniae (strain ATCC 29342 / M129 / Subtype 1) (Mycoplasmoides pneumoniae).